The primary structure comprises 665 residues: Probable potassium transport system protein Kup (665 aa).

12 helical membrane-spanning segments follow: residues 15-35 (SFLI…LYVM), 48-68 (ITPD…TLLT), 100-120 (WLII…MLTP), 147-167 (IIII…HFGT), 173-193 (IFGP…IVNL), 219-239 (LGFF…ALYS), 251-271 (LTWP…AAWI), 292-312 (MMPS…AIIA), 348-368 (IYMP…VLYF), 378-398 (YGLS…NYLL), 403-423 (PLPI…SFLI), and 431-451 (KGGF…YIWI).

This sequence belongs to the HAK/KUP transporter (TC 2.A.72) family.

The protein resides in the cell membrane. The catalysed reaction is K(+)(in) + H(+)(in) = K(+)(out) + H(+)(out). Functionally, transport of potassium into the cell. Likely operates as a K(+):H(+) symporter. The polypeptide is Probable potassium transport system protein Kup (Clostridium perfringens (strain ATCC 13124 / DSM 756 / JCM 1290 / NCIMB 6125 / NCTC 8237 / Type A)).